We begin with the raw amino-acid sequence, 311 residues long: tRNA-cytidine(32) 2-sulfurtransferase (311 aa).

Residues 58–63 (SGGKDS) carry the PP-loop motif motif. [4Fe-4S] cluster is bound by residues cysteine 133, cysteine 136, and cysteine 224.

It belongs to the TtcA family. In terms of assembly, homodimer. Mg(2+) serves as cofactor. [4Fe-4S] cluster is required as a cofactor.

The protein localises to the cytoplasm. It catalyses the reaction cytidine(32) in tRNA + S-sulfanyl-L-cysteinyl-[cysteine desulfurase] + AH2 + ATP = 2-thiocytidine(32) in tRNA + L-cysteinyl-[cysteine desulfurase] + A + AMP + diphosphate + H(+). Its pathway is tRNA modification. Functionally, catalyzes the ATP-dependent 2-thiolation of cytidine in position 32 of tRNA, to form 2-thiocytidine (s(2)C32). The sulfur atoms are provided by the cysteine/cysteine desulfurase (IscS) system. This is tRNA-cytidine(32) 2-sulfurtransferase from Polaromonas sp. (strain JS666 / ATCC BAA-500).